A 476-amino-acid chain; its full sequence is ATP synthase subunit beta (476 aa).

Position 154 to 161 (154 to 161) interacts with ATP; that stretch reads GGAGVGKT.

Belongs to the ATPase alpha/beta chains family. As to quaternary structure, F-type ATPases have 2 components, CF(1) - the catalytic core - and CF(0) - the membrane proton channel. CF(1) has five subunits: alpha(3), beta(3), gamma(1), delta(1), epsilon(1). CF(0) has four main subunits: a(1), b(1), b'(1) and c(9-12).

Its subcellular location is the cell inner membrane. It catalyses the reaction ATP + H2O + 4 H(+)(in) = ADP + phosphate + 5 H(+)(out). Its function is as follows. Produces ATP from ADP in the presence of a proton gradient across the membrane. The catalytic sites are hosted primarily by the beta subunits. The chain is ATP synthase subunit beta from Rhodopseudomonas palustris (strain ATCC BAA-98 / CGA009).